Consider the following 284-residue polypeptide: Efem/EfeO family lipoprotein (284 aa).

The signal sequence occupies residues 1–17 (MKKLTTLLLASTLLIAA). Cys18 carries N-palmitoyl cysteine lipidation. Cys18 carries S-diacylglycerol cysteine lipidation.

This sequence belongs to the EfeM/EfeO family.

The protein resides in the cell membrane. The chain is Efem/EfeO family lipoprotein from Staphylococcus aureus (strain MRSA252).